Reading from the N-terminus, the 953-residue chain is Lysosomal alpha-glucosidase (953 aa).

The first 27 residues, 1–27, serve as a signal peptide directing secretion; the sequence is MNIRKPLCSNSVVGACTLISLTTAVIL. Positions 28–69 are excised as a propeptide; the sequence is GHLMLRELMLLPQDLHESSSGLWKTYRPHHQEGYKPGPLHIQ. A P-type domain is found at 80–131; that stretch reads TQCDVPPSSRFDCAPDKGISQEQCEARGCCYVPAGQVLKEPQIGQPWCFFPP. 3 disulfide bridges follow: Cys82/Cys109, Cys92/Cys108, and Cys103/Cys127. Asn140, Asn233, and Asn390 each carry an N-linked (GlcNAc...) asparagine glycan. Asp404 is a binding site for substrate. N-linked (GlcNAc...) asparagine glycosylation occurs at Asn470. Asp518 acts as the Nucleophile in catalysis. The active site involves Glu521. Cysteines 533 and 558 form a disulfide. Substrate is bound by residues Arg600 and Asp616. The cysteines at positions 647 and 658 are disulfide-linked. A substrate-binding site is contributed by His674. N-linked (GlcNAc...) asparagine glycans are attached at residues Asn883, Asn926, and Asn933.

This sequence belongs to the glycosyl hydrolase 31 family.

It localises to the lysosome. The protein localises to the lysosome membrane. The enzyme catalyses Hydrolysis of terminal, non-reducing (1-&gt;4)-linked alpha-D-glucose residues with release of alpha-D-glucose.. Its function is as follows. Essential for the degradation of glycogen in lysosomes. Has highest activity on alpha-1,4-linked glycosidic linkages, but can also hydrolyze alpha-1,6-linked glucans. The polypeptide is Lysosomal alpha-glucosidase (Gaa) (Mus musculus (Mouse)).